The chain runs to 118 residues: Ribonuclease P protein component (118 aa).

The protein belongs to the RnpA family. In terms of assembly, consists of a catalytic RNA component (M1 or rnpB) and a protein subunit.

The catalysed reaction is Endonucleolytic cleavage of RNA, removing 5'-extranucleotides from tRNA precursor.. Functionally, RNaseP catalyzes the removal of the 5'-leader sequence from pre-tRNA to produce the mature 5'-terminus. It can also cleave other RNA substrates such as 4.5S RNA. The protein component plays an auxiliary but essential role in vivo by binding to the 5'-leader sequence and broadening the substrate specificity of the ribozyme. The polypeptide is Ribonuclease P protein component (Rickettsia akari (strain Hartford)).